The sequence spans 114 residues: Iron-sulfur cluster insertion protein ErpA (114 aa).

Positions 42, 106, and 108 each coordinate iron-sulfur cluster.

This sequence belongs to the HesB/IscA family. As to quaternary structure, homodimer. Iron-sulfur cluster is required as a cofactor.

In terms of biological role, required for insertion of 4Fe-4S clusters for at least IspG. The protein is Iron-sulfur cluster insertion protein ErpA of Haemophilus influenzae (strain PittEE).